The following is a 447-amino-acid chain: Phosphoglucosamine mutase (447 aa).

The Phosphoserine intermediate role is filled by Ser106. Positions 106, 245, 247, and 249 each coordinate Mg(2+). Position 106 is a phosphoserine (Ser106).

It belongs to the phosphohexose mutase family. It depends on Mg(2+) as a cofactor. Activated by phosphorylation.

It carries out the reaction alpha-D-glucosamine 1-phosphate = D-glucosamine 6-phosphate. Its function is as follows. Catalyzes the conversion of glucosamine-6-phosphate to glucosamine-1-phosphate. The sequence is that of Phosphoglucosamine mutase from Cupriavidus metallidurans (strain ATCC 43123 / DSM 2839 / NBRC 102507 / CH34) (Ralstonia metallidurans).